A 206-amino-acid chain; its full sequence is Ribosomal RNA small subunit methyltransferase G (206 aa).

Residues glycine 74, leucine 79, valine 125–glutamate 126, and arginine 140 contribute to the S-adenosyl-L-methionine site.

This sequence belongs to the methyltransferase superfamily. RNA methyltransferase RsmG family.

The protein localises to the cytoplasm. The catalysed reaction is guanosine(527) in 16S rRNA + S-adenosyl-L-methionine = N(7)-methylguanosine(527) in 16S rRNA + S-adenosyl-L-homocysteine. Its function is as follows. Specifically methylates the N7 position of guanine in position 527 of 16S rRNA. The polypeptide is Ribosomal RNA small subunit methyltransferase G (Shewanella amazonensis (strain ATCC BAA-1098 / SB2B)).